The chain runs to 335 residues: Dolichyl-diphosphooligosaccharide--protein glycosyltransferase subunit MAGT1 (335 aa).

Positions 1–29 (MAAGWWFWCVSVTVAVALLIVCDVPSVSA) are cleaved as a signal peptide. Topologically, residues 30–184 (QRKKEMVLSE…DVNIRVIRPP (155 aa)) are extracellular. The region spanning 47-175 (WTNKRPVIRM…IARWIADRTD (129 aa)) is the Thioredoxin domain. N-linked (GlcNAc...) asparagine glycosylation occurs at Asn-71. A disulfide bridge links Cys-87 with Cys-90. A helical transmembrane segment spans residues 185-205 (NYAGPLMLGLLLAVIGGLVYL). Topologically, residues 206–209 (RRSN) are cytoplasmic. A helical membrane pass occupies residues 210-230 (MEFLFNKTGWAFAALCFVLAM). Residues 231–270 (TSGQMWNHIRGPPYAHKNPHTGHVNYIHGSSQAQFVAETH) are Extracellular-facing. A helical transmembrane segment spans residues 271–291 (IVLLFNGGVTLGMVLLCEAAT). The Cytoplasmic segment spans residues 292–300 (SDMDIGKRK). A helical transmembrane segment spans residues 301-321 (IMCVAGIGLVVLFFSWMLSIF). The Extracellular portion of the chain corresponds to 322-335 (RSKYHGYPYSFLMS).

This sequence belongs to the OST3/OST6 family. In terms of assembly, accessory component of the STT3B-containing form of the oligosaccharyltransferase (OST) complex. OST exists in two different complex forms which contain common core subunits RPN1, RPN2, OST48, OST4, DAD1 and TMEM258, either STT3A or STT3B as catalytic subunits, and form-specific accessory subunits. OST can form stable complexes with the Sec61 complex or with both the Sec61 and TRAP complexes. The association of TUSC3 or MAGT1 with the STT3B-containing complex seems to be mutually exclusvice.

It is found in the cell membrane. The protein localises to the endoplasmic reticulum. It localises to the endoplasmic reticulum membrane. Its pathway is protein modification; protein glycosylation. In terms of biological role, accessory component of the STT3B-containing form of the N-oligosaccharyl transferase (OST) complex which catalyzes the transfer of a high mannose oligosaccharide from a lipid-linked oligosaccharide donor to an asparagine residue within an Asn-X-Ser/Thr consensus motif in nascent polypeptide chains. Involved in N-glycosylation of STT3B-dependent substrates. Specifically required for the glycosylation of a subset of acceptor sites that are near cysteine residues; in this function seems to act redundantly with TUSC3. In its oxidized form proposed to form transient mixed disulfides with a glycoprotein substrate to facilitate access of STT3B to the unmodified acceptor site. Also has oxidoreductase-independent functions in the STT3B-containing OST complex possibly involving substrate recognition. Could indirectly play a role in Mg(2+) transport in epithelial cells. The chain is Dolichyl-diphosphooligosaccharide--protein glycosyltransferase subunit MAGT1 from Pongo abelii (Sumatran orangutan).